Reading from the N-terminus, the 393-residue chain is NAD(P)H-quinone oxidoreductase subunit H, chloroplastic (393 aa).

This sequence belongs to the complex I 49 kDa subunit family. NDH is composed of at least 16 different subunits, 5 of which are encoded in the nucleus.

Its subcellular location is the plastid. The protein resides in the chloroplast thylakoid membrane. It catalyses the reaction a plastoquinone + NADH + (n+1) H(+)(in) = a plastoquinol + NAD(+) + n H(+)(out). The enzyme catalyses a plastoquinone + NADPH + (n+1) H(+)(in) = a plastoquinol + NADP(+) + n H(+)(out). In terms of biological role, NDH shuttles electrons from NAD(P)H:plastoquinone, via FMN and iron-sulfur (Fe-S) centers, to quinones in the photosynthetic chain and possibly in a chloroplast respiratory chain. The immediate electron acceptor for the enzyme in this species is believed to be plastoquinone. Couples the redox reaction to proton translocation, and thus conserves the redox energy in a proton gradient. The sequence is that of NAD(P)H-quinone oxidoreductase subunit H, chloroplastic from Eucalyptus globulus subsp. globulus (Tasmanian blue gum).